Reading from the N-terminus, the 473-residue chain is GTPase Der (473 aa).

EngA-type G domains follow at residues 3–167 (FTVA…GEDR) and 203–378 (LRVA…KVWN). GTP contacts are provided by residues 9 to 16 (GRPNVGKS), 56 to 60 (DTAGL), 119 to 122 (NKSE), 209 to 216 (GRPNAGKS), 256 to 260 (DTAGM), and 321 to 324 (NKWD). The KH-like domain occupies 379–463 (KRISTARLNR…PIRIHFRSPD (85 aa)).

Belongs to the TRAFAC class TrmE-Era-EngA-EngB-Septin-like GTPase superfamily. EngA (Der) GTPase family. In terms of assembly, associates with the 50S ribosomal subunit.

Its function is as follows. GTPase that plays an essential role in the late steps of ribosome biogenesis. The protein is GTPase Der of Rhizobium johnstonii (strain DSM 114642 / LMG 32736 / 3841) (Rhizobium leguminosarum bv. viciae).